A 378-amino-acid chain; its full sequence is Putative monoglyceride lipase (378 aa).

The GXSXG motif lies at 97-101 (GHSMG). Residue serine 99 is the Nucleophile of the active site. Residues aspartate 219 and histidine 249 each act as charge relay system in the active site. Over residues 276 to 292 (PSETVKSEQETAVEHPK) the composition is skewed to basic and acidic residues. The interval 276–350 (PSETVKSEQE…TSESTTVPET (75 aa)) is disordered. Residues 293–305 (PTATTSAPSASPT) show a composition bias toward low complexity. Position 301 is a phosphoserine (serine 301). Over residues 341–350 (TSESTTVPET) the composition is skewed to polar residues.

It belongs to the AB hydrolase superfamily. Monoacylglycerol lipase family.

The protein localises to the lipid droplet. It localises to the cytoplasm. It is found in the endoplasmic reticulum. The protein resides in the mitochondrion outer membrane. It carries out the reaction Hydrolyzes glycerol monoesters of long-chain fatty acids.. The protein operates within glycerolipid metabolism; triacylglycerol degradation. Converts monoacylglycerides (MAG) to free fatty acids and glycerol. Has a strong preference for monounsaturated monoglycerides. Required for efficient degradation of MAG, short-lived intermediates of glycerolipid metabolism which may also function as lipid signaling molecules. Controls inactivation of the signaling lipid N-palmitoylethanolamine (PEA). Involved in fatty acid ethyl ester (FAEE) catabolism. FAEEs are non-oxidative metabolites of ethanol that are transiently incorporated into lipid droplets (LDs). Their mobilization by LD-resident FAEE hydrolases facilitates a controlled metabolism of these potentially toxic lipid metabolites. In Schizosaccharomyces pombe (strain 972 / ATCC 24843) (Fission yeast), this protein is Putative monoglyceride lipase (mgl1).